We begin with the raw amino-acid sequence, 300 residues long: MTAVLPLPLPLADPAPRTPRLQREPLRLAKRLRHAVGQAIADFGMIAPGDKVMVCLSGGKDSYTLLDMLLQLQRSAPVPFTLVAVNLDQKQPDFPADVLPTYLRAQQVPFDIIEQDTYSVVSRVIPQGKTMCSLCSRLRRGALYAYAQAHGVTKIALGHHRDDIVATFFMNLFHHARLAAMAPKLRSDDGAHVVIRPLAYVREADIAAYAQARQFPIIPCNLCGSQENLQRQQVGRMLQQWDREQPGRVDQIARALGDVRPEQLADRTLFDFPGLGGGADAPLPDAAGWLAGSAAEHARD.

The PP-loop motif motif lies at 57 to 62 (SGGKDS). Residues C132, C135, and C223 each coordinate [4Fe-4S] cluster.

It belongs to the TtcA family. In terms of assembly, homodimer. Mg(2+) serves as cofactor. It depends on [4Fe-4S] cluster as a cofactor.

It localises to the cytoplasm. It catalyses the reaction cytidine(32) in tRNA + S-sulfanyl-L-cysteinyl-[cysteine desulfurase] + AH2 + ATP = 2-thiocytidine(32) in tRNA + L-cysteinyl-[cysteine desulfurase] + A + AMP + diphosphate + H(+). It functions in the pathway tRNA modification. In terms of biological role, catalyzes the ATP-dependent 2-thiolation of cytidine in position 32 of tRNA, to form 2-thiocytidine (s(2)C32). The sulfur atoms are provided by the cysteine/cysteine desulfurase (IscS) system. In Xanthomonas campestris pv. campestris (strain 8004), this protein is tRNA-cytidine(32) 2-sulfurtransferase.